The sequence spans 232 residues: Large ribosomal subunit protein uL16m (232 aa).

The transit peptide at 1–41 (MFPYLTRMNLSIKMGGLTLKESSPNAFLNNTTIARRFKHEY) directs the protein to the mitochondrion.

This sequence belongs to the universal ribosomal protein uL16 family. As to quaternary structure, component of the mitochondrial large ribosomal subunit (mt-LSU). Mature yeast 74S mitochondrial ribosomes consist of a small (37S) and a large (54S) subunit. The 37S small subunit contains a 15S ribosomal RNA (15S mt-rRNA) and 34 different proteins. The 54S large subunit contains a 21S rRNA (21S mt-rRNA) and 46 different proteins.

The protein resides in the mitochondrion. Component of the mitochondrial ribosome (mitoribosome), a dedicated translation machinery responsible for the synthesis of mitochondrial genome-encoded proteins, including at least some of the essential transmembrane subunits of the mitochondrial respiratory chain. The mitoribosomes are attached to the mitochondrial inner membrane and translation products are cotranslationally integrated into the membrane. In Saccharomyces cerevisiae (strain ATCC 204508 / S288c) (Baker's yeast), this protein is Large ribosomal subunit protein uL16m (MRPL16).